We begin with the raw amino-acid sequence, 546 residues long: Chaperonin GroEL (546 aa).

ATP is bound by residues 30–33, lysine 51, 87–91, glycine 415, and aspartate 496; these read TLGP and DGTTT. The segment at 526–546 is disordered; that stretch reads PQKDAPAGGGMPDMGGMGGMM. Over residues 532 to 546 the composition is skewed to gly residues; it reads AGGGMPDMGGMGGMM.

This sequence belongs to the chaperonin (HSP60) family. In terms of assembly, forms a cylinder of 14 subunits composed of two heptameric rings stacked back-to-back. Interacts with the co-chaperonin GroES.

The protein localises to the cytoplasm. The enzyme catalyses ATP + H2O + a folded polypeptide = ADP + phosphate + an unfolded polypeptide.. Its function is as follows. Together with its co-chaperonin GroES, plays an essential role in assisting protein folding. The GroEL-GroES system forms a nano-cage that allows encapsulation of the non-native substrate proteins and provides a physical environment optimized to promote and accelerate protein folding. The polypeptide is Chaperonin GroEL (Ruegeria pomeroyi (strain ATCC 700808 / DSM 15171 / DSS-3) (Silicibacter pomeroyi)).